A 219-amino-acid polypeptide reads, in one-letter code: Isovaleryl-homoserine lactone synthase (219 aa).

This sequence belongs to the autoinducer synthase family.

It catalyses the reaction 3-methylbutanoyl-CoA + S-adenosyl-L-methionine = N-isovaleryl-L-homoserine lactone + S-methyl-5'-thioadenosine + CoA + H(+). Functionally, catalyzes the synthesis of IV-HSL (isovaleryl-homoserine lactone), a quorum-sensing (QS) autoinducer molecule which binds to BjaR1 transcriptional regulator to activate expression of QS-dependent genes. Is active with isovaleryl-CoA but cannot use isovaleryl-ACP as acyl donor. The sequence is that of Isovaleryl-homoserine lactone synthase (bjaI) from Bradyrhizobium diazoefficiens (strain JCM 10833 / BCRC 13528 / IAM 13628 / NBRC 14792 / USDA 110).